The sequence spans 556 residues: Glutamine--tRNA ligase (556 aa).

Residues 34 to 44 (PEPNGFLHIGH) carry the 'HIGH' region motif. Residues 35–37 (EPN) and 41–47 (HIGHAKA) contribute to the ATP site. Residues D67 and Y212 each coordinate L-glutamine. Residues T231, 261–262 (RL), and 269–271 (MSK) each bind ATP. A 'KMSKS' region motif is present at residues 268–272 (LMSKR).

This sequence belongs to the class-I aminoacyl-tRNA synthetase family. Monomer.

It localises to the cytoplasm. The enzyme catalyses tRNA(Gln) + L-glutamine + ATP = L-glutaminyl-tRNA(Gln) + AMP + diphosphate. The polypeptide is Glutamine--tRNA ligase (Colwellia psychrerythraea (strain 34H / ATCC BAA-681) (Vibrio psychroerythus)).